The sequence spans 662 residues: Glycine--tRNA ligase beta subunit (662 aa).

The protein belongs to the class-II aminoacyl-tRNA synthetase family. As to quaternary structure, tetramer of two alpha and two beta subunits.

It is found in the cytoplasm. The catalysed reaction is tRNA(Gly) + glycine + ATP = glycyl-tRNA(Gly) + AMP + diphosphate. In Rickettsia akari (strain Hartford), this protein is Glycine--tRNA ligase beta subunit.